The primary structure comprises 577 residues: Arginine--tRNA ligase (577 aa).

The 'HIGH' region signature appears at 122–132 (PNVAKEMHVGH).

It belongs to the class-I aminoacyl-tRNA synthetase family. In terms of assembly, monomer.

It is found in the cytoplasm. It carries out the reaction tRNA(Arg) + L-arginine + ATP = L-arginyl-tRNA(Arg) + AMP + diphosphate. This chain is Arginine--tRNA ligase, found in Histophilus somni (strain 2336) (Haemophilus somnus).